Here is a 115-residue protein sequence, read N- to C-terminus: NADH-ubiquinone oxidoreductase chain 3 (115 aa).

A run of 3 helical transmembrane segments spans residues 3-23 (LVIA…VAFW), 55-75 (FFLV…LLPI), and 87-107 (LLSL…YEWL).

This sequence belongs to the complex I subunit 3 family. In terms of assembly, core subunit of respiratory chain NADH dehydrogenase (Complex I) which is composed of 45 different subunits. Interacts with TMEM186. Interacts with TMEM242.

It is found in the mitochondrion inner membrane. The catalysed reaction is a ubiquinone + NADH + 5 H(+)(in) = a ubiquinol + NAD(+) + 4 H(+)(out). Functionally, core subunit of the mitochondrial membrane respiratory chain NADH dehydrogenase (Complex I) which catalyzes electron transfer from NADH through the respiratory chain, using ubiquinone as an electron acceptor. Essential for the catalytic activity of complex I. This is NADH-ubiquinone oxidoreductase chain 3 from Ornithorhynchus anatinus (Duckbill platypus).